The sequence spans 228 residues: Large ribosomal subunit protein bL25 (228 aa).

The segment at 196-228 is disordered; the sequence is EEAAVAEAQSAESAEGKAEAEAEATNEKNKSEA. Positions 209–228 are enriched in basic and acidic residues; the sequence is AEGKAEAEAEATNEKNKSEA.

It belongs to the bacterial ribosomal protein bL25 family. CTC subfamily. Part of the 50S ribosomal subunit; part of the 5S rRNA/L5/L18/L25 subcomplex. Contacts the 5S rRNA. Binds to the 5S rRNA independently of L5 and L18.

This is one of the proteins that binds to the 5S RNA in the ribosome where it forms part of the central protuberance. This chain is Large ribosomal subunit protein bL25, found in Methylorubrum extorquens (strain PA1) (Methylobacterium extorquens).